Consider the following 548-residue polypeptide: T-complex protein 1 subunit alpha (548 aa).

This sequence belongs to the TCP-1 chaperonin family. In terms of assembly, heterooligomeric complex of about 850 to 900 kDa that forms two stacked rings, 12 to 16 nm in diameter.

It is found in the cytoplasm. Molecular chaperone; assists the folding of proteins upon ATP hydrolysis. Known to play a role, in vitro, in the folding of actin and tubulin. This is T-complex protein 1 subunit alpha (tcp1) from Dictyostelium discoideum (Social amoeba).